Reading from the N-terminus, the 237-residue chain is Urease subunit alpha (237 aa).

The urease gamma stretch occupies residues 1–102 (MKLTPKELDK…LVTIHTPVED (102 aa)). Residues 103–237 (NGKLAPGEVF…CGCEATKDKQ (135 aa)) form a urease beta region.

This sequence in the N-terminal section; belongs to the urease gamma subunit family. In the C-terminal section; belongs to the urease beta subunit family. Heterohexamer of 3 UreA (alpha) and 3 UreB (beta) subunits.

The protein localises to the cytoplasm. The enzyme catalyses urea + 2 H2O + H(+) = hydrogencarbonate + 2 NH4(+). Its pathway is nitrogen metabolism; urea degradation; CO(2) and NH(3) from urea (urease route): step 1/1. The sequence is that of Urease subunit alpha from Helicobacter felis.